Consider the following 280-residue polypeptide: Ribosomal RNA small subunit methyltransferase A (280 aa).

S-adenosyl-L-methionine contacts are provided by H15, L17, G42, E64, D89, and N109.

This sequence belongs to the class I-like SAM-binding methyltransferase superfamily. rRNA adenine N(6)-methyltransferase family. RsmA subfamily.

The protein localises to the cytoplasm. It catalyses the reaction adenosine(1518)/adenosine(1519) in 16S rRNA + 4 S-adenosyl-L-methionine = N(6)-dimethyladenosine(1518)/N(6)-dimethyladenosine(1519) in 16S rRNA + 4 S-adenosyl-L-homocysteine + 4 H(+). In terms of biological role, specifically dimethylates two adjacent adenosines (A1518 and A1519) in the loop of a conserved hairpin near the 3'-end of 16S rRNA in the 30S particle. May play a critical role in biogenesis of 30S subunits. The sequence is that of Ribosomal RNA small subunit methyltransferase A from Prochlorococcus marinus (strain MIT 9303).